The following is a 141-amino-acid chain: Extracellular globin-1 (141 aa).

Positions 1–141 (DCNTLKRFKV…YAVIAAGIKP (141 aa)) constitute a Globin domain. Cys2 and Cys131 form a disulfide bridge. A heme b-binding site is contributed by His94.

It belongs to the globin family. In terms of assembly, the giant hemoglobins of worms are formed of a monomeric subunit and a disulfide-bonded trimer. This subunit is monomeric.

The protein localises to the secreted. This is Extracellular globin-1 from Metaphire sieboldi (Earthworm).